The sequence spans 424 residues: Lipoamide acyltransferase component of branched-chain alpha-keto acid dehydrogenase complex (424 aa).

The Lipoyl-binding domain maps to 3 to 78 (IEQMTMPQLG…QVGEMICKIE (76 aa)). Lys44 is subject to N6-lipoyllysine. Positions 82 to 115 (ANPAEQKQEQPAASEAAENPVAKSAGAADQPNKK) are disordered. The 38-residue stretch at 116-153 (RYSPAVLRLAGEHGIDLDQVTGTGAGGRITRKDIQRLI) folds into the Peripheral subunit-binding (PSBD) domain. A disordered region spans residues 154–193 (ETGGVQEQNPEELKTAAPAPKSASKPEPKEETSYPASAAG). Residues His395 and Asp399 contribute to the active site.

The protein belongs to the 2-oxoacid dehydrogenase family. Forms a 24-polypeptide structural core with octahedral symmetry. It depends on (R)-lipoate as a cofactor.

It carries out the reaction N(6)-[(R)-dihydrolipoyl]-L-lysyl-[protein] + 2-methylpropanoyl-CoA = N(6)-[(R)-S(8)-2-methylpropanoyldihydrolipoyl]-L-lysyl-[protein] + CoA. The branched-chain alpha-keto dehydrogenase complex catalyzes the overall conversion of alpha-keto acids to acyl-CoA and CO(2). It contains multiple copies of three enzymatic components: branched-chain alpha-keto acid decarboxylase (E1), lipoamide acyltransferase (E2) and lipoamide dehydrogenase (E3). The sequence is that of Lipoamide acyltransferase component of branched-chain alpha-keto acid dehydrogenase complex (bfmBB) from Bacillus subtilis (strain 168).